The sequence spans 116 residues: Large ribosomal subunit protein uL24 (116 aa).

This sequence belongs to the universal ribosomal protein uL24 family. As to quaternary structure, part of the 50S ribosomal subunit.

In terms of biological role, one of two assembly initiator proteins, it binds directly to the 5'-end of the 23S rRNA, where it nucleates assembly of the 50S subunit. Functionally, one of the proteins that surrounds the polypeptide exit tunnel on the outside of the subunit. The sequence is that of Large ribosomal subunit protein uL24 from Protochlamydia amoebophila (strain UWE25).